The following is a 534-amino-acid chain: Glucomannan 4-beta-mannosyltransferase 2 (534 aa).

The helical transmembrane segment at 36-56 (VIVPLLQLAVYICLLMSVMLL) threads the bilayer. D136 is an active-site residue. Residues D195 and D197 each contribute to the substrate site. D289 is a catalytic residue. Helical transmembrane passes span 368–388 (IIAHWVTFCFYCVVLPLTILV), 404–426 (IITILNSVGTPRSIHLLFYWILF), 483–503 (LNTLELGFAAFLFVCGCYDFV), and 509–529 (YFIYLFLQTMSFFISGLGWIG).

This sequence belongs to the glycosyltransferase 2 family. Plant cellulose synthase-like A subfamily.

It localises to the golgi apparatus membrane. It catalyses the reaction GDP-mannose + (glucomannan)n = GDP + (glucomannan)n+1.. Functionally, possesses glucomannan synthase and mannan synthase activities in vitro. Mannan synthase consists of a 4-beta-mannosyltransferase activity on mannan using GDP-mannose. The beta-1,4-mannan product is the backbone for galactomannan synthesis by galactomannan galactosyltransferase. Galactomannan is a noncellulosic polysaccharides of plant cell wall. The chain is Glucomannan 4-beta-mannosyltransferase 2 from Arabidopsis thaliana (Mouse-ear cress).